The chain runs to 64 residues: Disintegrin VA6 (64 aa).

A Disintegrin domain is found at 1 to 64 (NSANPCCDPV…SDCPRNPYKS (64 aa)). Intrachain disulfides connect C6/C29, C20/C26, C25/C50, and C38/C57. Residues 42–44 (RGD) carry the Cell attachment site motif.

This sequence belongs to the venom metalloproteinase (M12B) family. P-II subfamily. P-IId sub-subfamily. As to quaternary structure, homodimer; disulfide-linked. In terms of tissue distribution, expressed by the venom gland.

The protein resides in the secreted. In terms of biological role, poor inhibitor of platelet aggregation. The disintegrin inhibits the adhesion of cells expressing the RGD-dependent integrin alpha-5/beta-1 (ITGA5/ITGB1) to immobilized fibronectin. Inhibition on alpha-IIb/beta-3 (ITGA2B/ITGB3) is low, and there is no inhibition on alpha-1/beta-1 (ITGA1/ITGB1), alpha-2/beta-1 (ITGA2/ITGB1) and alpha-6/beta-1 (ITGA6/ITGB1). This Vipera ammodytes ammodytes (Western sand viper) protein is Disintegrin VA6.